Here is a 324-residue protein sequence, read N- to C-terminus: Annexin A10 (324 aa).

Annexin repeat units follow at residues 17–88 (FNPM…GLMY), 89–160 (PPPS…NLVQ), 171–243 (AMAA…AIVR), and 247–318 (DKPS…AICA).

The protein belongs to the annexin family.

This Mus musculus (Mouse) protein is Annexin A10 (Anxa10).